Reading from the N-terminus, the 560-residue chain is Dimethylaniline monooxygenase [N-oxide-forming] 4 (560 aa).

FAD-binding positions include 9-13 (GAGVS), E32, and 40-41 (LW). NADP(+) contacts are provided by residues 60–61 (TN) and 195–198 (TGGD). A helical membrane pass occupies residues 510–530 (LSHYLIAWGAPVLLVSLLLIY).

This sequence belongs to the FMO family. Requires FAD as cofactor.

The protein localises to the microsome membrane. It localises to the endoplasmic reticulum membrane. It carries out the reaction N,N-dimethylaniline + NADPH + O2 + H(+) = N,N-dimethylaniline N-oxide + NADP(+) + H2O. Functionally, this protein is involved in the oxidative metabolism of a variety of xenobiotics such as drugs and pesticides. The protein is Dimethylaniline monooxygenase [N-oxide-forming] 4 (Fmo4) of Mus musculus (Mouse).